Consider the following 242-residue polypeptide: Small ribosomal subunit protein uS2 (242 aa).

The protein belongs to the universal ribosomal protein uS2 family.

The protein is Small ribosomal subunit protein uS2 of Shewanella sediminis (strain HAW-EB3).